The chain runs to 113 residues: UPF0251 protein TK0562 (113 aa).

Belongs to the UPF0251 family.

This is UPF0251 protein TK0562 from Thermococcus kodakarensis (strain ATCC BAA-918 / JCM 12380 / KOD1) (Pyrococcus kodakaraensis (strain KOD1)).